Here is a 271-residue protein sequence, read N- to C-terminus: Ribosomal RNA small subunit methyltransferase A (271 aa).

S-adenosyl-L-methionine is bound by residues His14, Leu16, Gly41, Glu63, Asp89, and Asn107.

Belongs to the class I-like SAM-binding methyltransferase superfamily. rRNA adenine N(6)-methyltransferase family. RsmA subfamily.

It is found in the cytoplasm. It catalyses the reaction adenosine(1518)/adenosine(1519) in 16S rRNA + 4 S-adenosyl-L-methionine = N(6)-dimethyladenosine(1518)/N(6)-dimethyladenosine(1519) in 16S rRNA + 4 S-adenosyl-L-homocysteine + 4 H(+). Its function is as follows. Specifically dimethylates two adjacent adenosines (A1518 and A1519) in the loop of a conserved hairpin near the 3'-end of 16S rRNA in the 30S particle. May play a critical role in biogenesis of 30S subunits. This is Ribosomal RNA small subunit methyltransferase A from Lawsonia intracellularis (strain PHE/MN1-00).